The sequence spans 546 residues: Probable protein kinase UbiB (546 aa).

The region spanning 124–502 is the Protein kinase domain; the sequence is DFEIKPLASA…HVRQGQSRYF (379 aa). Residues 130–138 and K153 each bind ATP; that span reads LASASIAQV. The active-site Proton acceptor is the D288. 2 helical membrane-spanning segments follow: residues 501–521 and 522–542; these read YFLG…VSRP and EWGL…FVGW.

The protein belongs to the ABC1 family. UbiB subfamily.

It localises to the cell inner membrane. Its pathway is cofactor biosynthesis; ubiquinone biosynthesis [regulation]. Is probably a protein kinase regulator of UbiI activity which is involved in aerobic coenzyme Q (ubiquinone) biosynthesis. The protein is Probable protein kinase UbiB of Shigella sonnei (strain Ss046).